A 147-amino-acid polypeptide reads, in one-letter code: uncharacterized protein (147 aa).

The helical transmembrane segment at 63-79 (LFIVACSAVFATIAYIN) threads the bilayer.

It belongs to the FUN14 family.

It localises to the membrane. This is an uncharacterized protein from Schizosaccharomyces pombe (strain 972 / ATCC 24843) (Fission yeast).